A 180-amino-acid chain; its full sequence is Peptidyl-tRNA hydrolase (180 aa).

Tyr-13 serves as a coordination point for tRNA. His-18 (proton acceptor) is an active-site residue. 3 residues coordinate tRNA: Tyr-58, Asn-60, and Asn-100.

It belongs to the PTH family. In terms of assembly, monomer.

The protein resides in the cytoplasm. It carries out the reaction an N-acyl-L-alpha-aminoacyl-tRNA + H2O = an N-acyl-L-amino acid + a tRNA + H(+). Hydrolyzes ribosome-free peptidyl-tRNAs (with 1 or more amino acids incorporated), which drop off the ribosome during protein synthesis, or as a result of ribosome stalling. Its function is as follows. Catalyzes the release of premature peptidyl moieties from peptidyl-tRNA molecules trapped in stalled 50S ribosomal subunits, and thus maintains levels of free tRNAs and 50S ribosomes. The polypeptide is Peptidyl-tRNA hydrolase (Fervidobacterium nodosum (strain ATCC 35602 / DSM 5306 / Rt17-B1)).